The sequence spans 458 residues: Homogentisate 1,2-dioxygenase (458 aa).

H308 acts as the Proton acceptor in catalysis. Residues H351 and E357 each contribute to the Fe cation site. The homogentisate site is built by Y366 and H387. H387 contributes to the Fe cation binding site.

The protein belongs to the homogentisate dioxygenase family. In terms of assembly, hexamer; dimer of trimers. Requires Fe cation as cofactor.

The catalysed reaction is homogentisate + O2 = 4-maleylacetoacetate + H(+). It participates in amino-acid degradation; L-phenylalanine degradation; acetoacetate and fumarate from L-phenylalanine: step 4/6. Functionally, involved in the catabolism of homogentisate (2,5-dihydroxyphenylacetate or 2,5-OH-PhAc), a central intermediate in the degradation of phenylalanine and tyrosine. Catalyzes the oxidative ring cleavage of the aromatic ring of homogentisate to yield maleylacetoacetate. This chain is Homogentisate 1,2-dioxygenase, found in Xanthomonas axonopodis pv. citri (strain 306).